Reading from the N-terminus, the 447-residue chain is 3-phosphoshikimate 1-carboxyvinyltransferase (447 aa).

A disordered region spans residues 1–22; that stretch reads MTPSLKRLSGAMRARPAPALSG. K30, S31, and R35 together coordinate 3-phosphoshikimate. K30 contacts phosphoenolpyruvate. Residues G102 and R130 each coordinate phosphoenolpyruvate. Residues S173, Q175, D325, and K352 each coordinate 3-phosphoshikimate. Q175 serves as a coordination point for phosphoenolpyruvate. D325 functions as the Proton acceptor in the catalytic mechanism. Residues R356 and R401 each coordinate phosphoenolpyruvate.

This sequence belongs to the EPSP synthase family. As to quaternary structure, monomer.

The protein resides in the cytoplasm. It carries out the reaction 3-phosphoshikimate + phosphoenolpyruvate = 5-O-(1-carboxyvinyl)-3-phosphoshikimate + phosphate. It participates in metabolic intermediate biosynthesis; chorismate biosynthesis; chorismate from D-erythrose 4-phosphate and phosphoenolpyruvate: step 6/7. Its function is as follows. Catalyzes the transfer of the enolpyruvyl moiety of phosphoenolpyruvate (PEP) to the 5-hydroxyl of shikimate-3-phosphate (S3P) to produce enolpyruvyl shikimate-3-phosphate and inorganic phosphate. The polypeptide is 3-phosphoshikimate 1-carboxyvinyltransferase (Maricaulis maris (strain MCS10) (Caulobacter maris)).